Consider the following 233-residue polypeptide: 7-cyano-7-deazaguanine synthase (233 aa).

8–18 (FSGGQDSTTCL) lines the ATP pocket. Zn(2+) is bound by residues Cys-188, Cys-197, Cys-200, and Cys-203.

The protein belongs to the QueC family. Zn(2+) is required as a cofactor.

The enzyme catalyses 7-carboxy-7-deazaguanine + NH4(+) + ATP = 7-cyano-7-deazaguanine + ADP + phosphate + H2O + H(+). Its pathway is purine metabolism; 7-cyano-7-deazaguanine biosynthesis. Catalyzes the ATP-dependent conversion of 7-carboxy-7-deazaguanine (CDG) to 7-cyano-7-deazaguanine (preQ(0)). This Klebsiella pneumoniae (strain 342) protein is 7-cyano-7-deazaguanine synthase.